The primary structure comprises 242 residues: Putative S-adenosyl-L-methionine-dependent methyltransferase Mmcs_0580 (242 aa).

Residues Asp104 and 134-135 each bind S-adenosyl-L-methionine; that span reads DL.

This sequence belongs to the UPF0677 family.

Exhibits S-adenosyl-L-methionine-dependent methyltransferase activity. This Mycobacterium sp. (strain MCS) protein is Putative S-adenosyl-L-methionine-dependent methyltransferase Mmcs_0580.